The primary structure comprises 67 residues: Large ribosomal subunit protein uL29 (67 aa).

The protein belongs to the universal ribosomal protein uL29 family. In terms of assembly, part of the 50S ribosomal subunit. Contacts protein L23 and trigger factor when it is complexed with the ribosome.

Binds the 23S rRNA. One of the proteins that surrounds the polypeptide exit tunnel on the outside of the subunit. The polypeptide is Large ribosomal subunit protein uL29 (rpmC) (Deinococcus radiodurans (strain ATCC 13939 / DSM 20539 / JCM 16871 / CCUG 27074 / LMG 4051 / NBRC 15346 / NCIMB 9279 / VKM B-1422 / R1)).